We begin with the raw amino-acid sequence, 476 residues long: MASPFSGALQLTDLDDFIGPSQECIKPVKVEKRAGSGVAKIRIEDDGSYFQINQDGGTRRLEKAKVSLNDCLACSGCITSAETVLITQQSHEELKKVLDANKMVAPSQQRLVVVSVSPQSRASLAARFQLNPTDTARKLTSFFKKIGVHFVFDTAFSRHFSLLESQREFVRRFRGQADCKQALPLLASACPGWICYAEKTHGSFILPHISTARSPQQVMGSLVKDFFAQQQHLTPDKIYHVTVMPCYDKKLEASRPDFFNQEHQTRDVDCVLTTGEVFRLLEEEGVSLPDLEPAPLDSLCSGASAEEPTSHRGGGSGGYLEHVFRHAARELFGIHVAEVTYKPLRNKDFQEVTLEKEGQVLLHLAMAYGFRNIQNLVQRLKRGRCPYHYVEVMACPSGCLNGGGQLQAPDRPSRELLQHVERLYGMVRAEAPEDAPGVQELYTHWLQGTDSECAGRLLHTQYHAVEKASTGLGIRW.

At Ala-2 the chain carries N-acetylalanine. Positions 24, 71, 74, 77, 190, 246, 395, and 399 each coordinate [4Fe-4S] cluster.

The protein belongs to the NARF family. As to quaternary structure, external component of the CIA complex. In the CIA complex, interacts directly with CIAO1 and MMS19.

In terms of biological role, component of the cytosolic iron-sulfur protein assembly (CIA) complex, a multiprotein complex that mediates the incorporation of iron-sulfur cluster into extramitochondrial Fe/S proteins. Seems to negatively regulate the level of HIF1A expression, although this effect could be indirect. This chain is Cytosolic iron-sulfur assembly component 3, found in Pongo abelii (Sumatran orangutan).